The chain runs to 485 residues: Sphingosine kinase 1 (485 aa).

One can recognise a DAGKc domain in the interval 116 to 258 (GRPKKLLVFV…LDVATISQGT (143 aa)). ATP is bound by residues 126 to 128 (NPF) and Thr158. 183–186 (SGDG) is a substrate binding site. Residue Asp185 is the Proton donor/acceptor of the active site. ATP-binding positions include Glu190 and 215-217 (GSG). Asp276 contributes to the substrate binding site. Residues Arg283, Arg289, and 446-448 (DGE) each bind ATP.

The cofactor is Mg(2+). Highly expressed in stems and flowers and at lower levels in roots, leaves and siliques.

Its subcellular location is the vacuole membrane. It catalyses the reaction a sphingoid base + ATP = a sphingoid 1-phosphate + ADP + H(+). With respect to regulation, activated by phosphatidic acid (PA). Binding with PA stimulates the activity by promoting the binding of substrate to the catalytic site. Functionally, involved in the production of sphingolipid metabolites. Phosphorylates sphingosine and various sphingoid long-chain base (LCB) products, such as phytosphingosine (PHS, 4-hydroxysphinganine), 4-hydroxy-8-sphingenine, 4,8-sphingadienine, D-erythro-dihydrosphingosine and D,L-threo-dihydrosphingosine. Is required for abscisic acid (ABA) signaling that mediates stomatal closure, inhibition of seed germination and root elongation. May function upstream of PLDALPHA1 and phosphatidic acid (PA) in an amplification response to ABA that mediates stomatal closure. This chain is Sphingosine kinase 1 (SPHK1), found in Arabidopsis thaliana (Mouse-ear cress).